The primary structure comprises 731 residues: Actin filament-associated protein 1 (731 aa).

The residue at position 1 (Met-1) is an N-acetylmethionine. Positions 56 to 90 are disordered; the sequence is NNLPAPPQMPLPEIPQPWLPPDSGPPPLPTSSLPE. Positions 59 to 84 are enriched in pro residues; the sequence is PAPPQMPLPEIPQPWLPPDSGPPPLP. The short motif at 70-73 is the SH3-binding element; it reads PQPW. Residues 93–96 carry the SH2-binding 1 motif; the sequence is YEEA. A disordered region spans residues 118-139; it reads SSSYESYDEEEEDGKGKKTRHQ. The PH 1 domain maps to 152 to 248; the sequence is DAKICAFLLR…WLKVIKEAYS (97 aa). The disordered stretch occupies residues 252-318; it reads GPVDPECSPP…SKSEAKGTVS (67 aa). Positions 271–284 are enriched in basic and acidic residues; it reads AELEKKLSSERPSS. Phosphoserine occurs at positions 283 and 284. The PH 2 domain occupies 348 to 442; sequence DVPTCGYLNV…WIGILLAETG (95 aa). The SH2-binding 2 signature appears at 452–457; the sequence is YDYIDV. The tract at residues 513-544 is disordered; sequence KNKKPPASSNGVPVKGKAPSSQQKKVETAGGV. Phosphoserine is present on Ser-549. Residues 558–649 are a coiled coil; sequence KNRVEADAKR…VKESLKKALA (92 aa). Residues 595-638 are interaction with F-actin; that stretch reads DLRAAIEVNAGRKTQAALEDKLKRLEEECKQREAERVSLELELT. The disordered stretch occupies residues 658–731; the sequence is IEPRSGTSSP…AKEWELKNGT (74 aa). Residues Ser-665, Ser-666, and Ser-669 each carry the phosphoserine modification. Thr-676 bears the Phosphothreonine mark. A compositionally biased stretch (polar residues) spans 678-687; sequence ENSPISSCDT. Phosphoserine is present on residues Ser-680 and Ser-688. Residues 721-731 show a composition bias toward basic and acidic residues; sequence KAKEWELKNGT.

Monomer and homomultimer. Interacts via its C-terminus with F-actin; probably involving AFAP1 multimers. Interacts with activated SRC SH3-SH2 domains. Interacts via its PH 1 domain with PRKCA, PRKCB and PRKCI. In terms of processing, phosphorylated on tyrosine residues by SRC.

It localises to the cytoplasm. Its subcellular location is the cytoskeleton. The protein localises to the stress fiber. In terms of biological role, can cross-link actin filaments into both network and bundle structures. May modulate changes in actin filament integrity and induce lamellipodia formation. May function as an adapter molecule that links other proteins, such as SRC and PKC to the actin cytoskeleton. This Mus musculus (Mouse) protein is Actin filament-associated protein 1 (Afap1).